The following is a 104-amino-acid chain: Sweet protein mabinlin-3 (104 aa).

4 disulfides stabilise this stretch: cysteine 4–cysteine 53, cysteine 17–cysteine 42, cysteine 43–cysteine 91, and cysteine 55–cysteine 99.

It belongs to the 2S seed storage albumins family. Heterodimer of a small A and a large B chain linked by disulfide bonds.

Its function is as follows. Heat stable 2S seed storage protein having sweetness-inducing activity. This chain is Sweet protein mabinlin-3, found in Capparis masaikai (Mabinlang).